The chain runs to 58 residues: Small ribosomal subunit protein bS21 (58 aa).

A disordered region spans residues 34 to 58 (KREHYESPSVRRKKKSEAARRRKRR). The segment covering 43–58 (VRRKKKSEAARRRKRR) has biased composition (basic residues).

It belongs to the bacterial ribosomal protein bS21 family.

The chain is Small ribosomal subunit protein bS21 from Caldicellulosiruptor bescii (strain ATCC BAA-1888 / DSM 6725 / KCTC 15123 / Z-1320) (Anaerocellum thermophilum).